A 166-amino-acid chain; its full sequence is NAD(P)H-quinone oxidoreductase subunit I, chloroplastic (166 aa).

4Fe-4S ferredoxin-type domains lie at 55–84 (GRIHFEFDKCIACEVCVRVCPIDLPVVDWK) and 95–124 (LNYSIDFGICIFCGNCVEYCPTNCLSMTEE). [4Fe-4S] cluster is bound by residues Cys64, Cys67, Cys70, Cys74, Cys104, Cys107, Cys110, and Cys114.

It belongs to the complex I 23 kDa subunit family. As to quaternary structure, NDH is composed of at least 16 different subunits, 5 of which are encoded in the nucleus. Requires [4Fe-4S] cluster as cofactor.

The protein localises to the plastid. Its subcellular location is the chloroplast thylakoid membrane. It carries out the reaction a plastoquinone + NADH + (n+1) H(+)(in) = a plastoquinol + NAD(+) + n H(+)(out). The enzyme catalyses a plastoquinone + NADPH + (n+1) H(+)(in) = a plastoquinol + NADP(+) + n H(+)(out). Functionally, NDH shuttles electrons from NAD(P)H:plastoquinone, via FMN and iron-sulfur (Fe-S) centers, to quinones in the photosynthetic chain and possibly in a chloroplast respiratory chain. The immediate electron acceptor for the enzyme in this species is believed to be plastoquinone. Couples the redox reaction to proton translocation, and thus conserves the redox energy in a proton gradient. The protein is NAD(P)H-quinone oxidoreductase subunit I, chloroplastic of Marshallia caespitosa (Barbara's buttons).